The chain runs to 369 residues: MATLDVNPQRYQQQLAEKVQRLTDMFAPYQAPELEVFESPEQHYRMRAEFRVWHEGEEMYYIMFNQETREKYRVDQFPAASRLINDLMPLLIDAMKDNESLRRKLFQVDFLSTLSGEILVSLLYHRQLDDAWIENAKALKQRLNDEGFDLNLIGRARKMKIVLDRDYVVEKLDVNGKPYVYQQVENSFTQPNGKVAEKMLEWAVDCTQESQGDLLELYCGNGNFSLALAQNFERVLATELAKPSVESAQYNIAANKIENVQIIRMSAEEFTEAMEGKREFRRLKDNGIDLKSYNCNTIFVDPPRSGMDVDTCKMVQGYERILYISCNPETLKENLDILSETHHITRFALFDQFPYTHHMEAGVMLERKA.

Gln190, Tyr218, Asn223, Glu239, and Asp301 together coordinate S-adenosyl-L-methionine. The active-site Nucleophile is the Cys326. The active-site Proton acceptor is Glu360.

The protein belongs to the class I-like SAM-binding methyltransferase superfamily. RNA M5U methyltransferase family. TrmA subfamily.

The enzyme catalyses uridine(54) in tRNA + S-adenosyl-L-methionine = 5-methyluridine(54) in tRNA + S-adenosyl-L-homocysteine + H(+). It carries out the reaction uridine(341) in tmRNA + S-adenosyl-L-methionine = 5-methyluridine(341) in tmRNA + S-adenosyl-L-homocysteine + H(+). In terms of biological role, dual-specificity methyltransferase that catalyzes the formation of 5-methyluridine at position 54 (m5U54) in all tRNAs, and that of position 341 (m5U341) in tmRNA (transfer-mRNA). This is tRNA/tmRNA (uracil-C(5))-methyltransferase from Vibrio vulnificus (strain YJ016).